Consider the following 109-residue polypeptide: Small ribosomal subunit protein bS6 (109 aa).

The protein belongs to the bacterial ribosomal protein bS6 family.

Functionally, binds together with bS18 to 16S ribosomal RNA. The protein is Small ribosomal subunit protein bS6 of Ehrlichia canis (strain Jake).